We begin with the raw amino-acid sequence, 79 residues long: Exodeoxyribonuclease 7 small subunit (79 aa).

The protein belongs to the XseB family. In terms of assembly, heterooligomer composed of large and small subunits.

Its subcellular location is the cytoplasm. It catalyses the reaction Exonucleolytic cleavage in either 5'- to 3'- or 3'- to 5'-direction to yield nucleoside 5'-phosphates.. Its function is as follows. Bidirectionally degrades single-stranded DNA into large acid-insoluble oligonucleotides, which are then degraded further into small acid-soluble oligonucleotides. The chain is Exodeoxyribonuclease 7 small subunit from Lactococcus lactis subsp. lactis (strain IL1403) (Streptococcus lactis).